Here is a 95-residue protein sequence, read N- to C-terminus: MEMARAHLFIRGKVQGVFFRQSMKEVATRNGVRGWVRNRSDGRTVEAVLEGPRDAVLKVIEWARVGPPGARVEDVEVRWEEYKGEFQDFRILPTF.

Residues 5–93 (RAHLFIRGKV…GEFQDFRILP (89 aa)) form the Acylphosphatase-like domain. Active-site residues include Arg20 and Asn38.

The protein belongs to the acylphosphatase family.

The catalysed reaction is an acyl phosphate + H2O = a carboxylate + phosphate + H(+). The polypeptide is Acylphosphatase (acyP) (Pyrobaculum arsenaticum (strain DSM 13514 / JCM 11321 / PZ6)).